The sequence spans 264 residues: MSVDLFDVKGKIALVTGSTHGLGMAMAKGLGLAGATIVVNGNSSQDKIDSAIAEYEKEGIKAVGYKFNVAKEDEVQAAVSKIEAEVGPIDILINNAGIIKRTPLLEMEVADFKEVVDIDLVSPFIVSKHVVKNMVERKAGKVINICSMMSELGRNSVGAYAAAKGGLKMLTQNMATEWAKYNIQVNGIGPGYFATSQTAPIRVDGHPFNDFIINRTPAAKWGDPNDLAGAAIFLSSKASDFVNGHVVYVDGGILATIGKPSNEE.

14-38 is an NAD(+) binding site; sequence LVTGSTHGLGMAMAKGLGLAGATIV. Ser147 contributes to the substrate binding site. Tyr160 acts as the Proton acceptor in catalysis.

Belongs to the short-chain dehydrogenases/reductases (SDR) family. As to quaternary structure, homotetramer.

Its subcellular location is the cytoplasm. The catalysed reaction is 2-dehydro-3-deoxy-D-gluconate + NAD(+) = 3-deoxy-D-glycero-2,5-hexodiulosonate + NADH + H(+). Its function is as follows. 2-dehydro-3-deoxy-D-gluconate 5-dehydrogenase involved in ulvan degradation. Ulvan is the main polysaccharide component of the Ulvales (green seaweed) cell wall. It is composed of disaccharide building blocks comprising 3-sulfated rhamnose (Rha3S) linked to D-glucuronic acid (GlcA), L-iduronic acid (IduA), or D-xylose (Xyl). Catalyzes the reversible reduction of 2,5-diketo-3-deoxygluconate (DKII or 4,6-dihydroxy-2,5-dioxohexanoate) into 2-keto-3-deoxygluconate (KDG or 2-dehydro-3-deoxygluconate) with a concomitant oxidation of NADH. The chain is 2-dehydro-3-deoxy-D-gluconate 5-dehydrogenase (kduD) from Formosa agariphila (strain DSM 15362 / KCTC 12365 / LMG 23005 / KMM 3901 / M-2Alg 35-1).